The primary structure comprises 425 residues: Glutamyl-tRNA(Gln) amidotransferase subunit A (425 aa).

Catalysis depends on charge relay system residues Lys29 and Ser104. Ser128 (acyl-ester intermediate) is an active-site residue.

It belongs to the amidase family. GatA subfamily. As to quaternary structure, heterotrimer of A, B and C subunits.

The enzyme catalyses L-glutamyl-tRNA(Gln) + L-glutamine + ATP + H2O = L-glutaminyl-tRNA(Gln) + L-glutamate + ADP + phosphate + H(+). Allows the formation of correctly charged Gln-tRNA(Gln) through the transamidation of misacylated Glu-tRNA(Gln) in organisms which lack glutaminyl-tRNA synthetase. The reaction takes place in the presence of glutamine and ATP through an activated gamma-phospho-Glu-tRNA(Gln). The polypeptide is Glutamyl-tRNA(Gln) amidotransferase subunit A (Haloarcula marismortui (strain ATCC 43049 / DSM 3752 / JCM 8966 / VKM B-1809) (Halobacterium marismortui)).